Reading from the N-terminus, the 221-residue chain is Enolase-phosphatase E1 (221 aa).

The Mg(2+) site is built by Asp9 and Glu11. Residues 116–117 (SS) and Lys152 contribute to the substrate site. Residue Asp180 participates in Mg(2+) binding.

It belongs to the HAD-like hydrolase superfamily. MasA/MtnC family. As to quaternary structure, monomer. Requires Mg(2+) as cofactor.

The protein resides in the cytoplasm. The protein localises to the nucleus. It carries out the reaction 5-methylsulfanyl-2,3-dioxopentyl phosphate + H2O = 1,2-dihydroxy-5-(methylsulfanyl)pent-1-en-3-one + phosphate. It functions in the pathway amino-acid biosynthesis; L-methionine biosynthesis via salvage pathway; L-methionine from S-methyl-5-thio-alpha-D-ribose 1-phosphate: step 3/6. It participates in amino-acid biosynthesis; L-methionine biosynthesis via salvage pathway; L-methionine from S-methyl-5-thio-alpha-D-ribose 1-phosphate: step 4/6. Bifunctional enzyme that catalyzes the enolization of 2,3-diketo-5-methylthiopentyl-1-phosphate (DK-MTP-1-P) into the intermediate 2-hydroxy-3-keto-5-methylthiopentenyl-1-phosphate (HK-MTPenyl-1-P), which is then dephosphorylated to form the acireductone 1,2-dihydroxy-3-keto-5-methylthiopentene (DHK-MTPene). This is Enolase-phosphatase E1 from Kluyveromyces lactis (strain ATCC 8585 / CBS 2359 / DSM 70799 / NBRC 1267 / NRRL Y-1140 / WM37) (Yeast).